Reading from the N-terminus, the 108-residue chain is Thiosulfate sulfurtransferase GlpE (108 aa).

The 89-residue stretch at 18 to 106 folds into the Rhodanese domain; it reads ENEGATLADI…WERSGLPIET (89 aa). Catalysis depends on Cys-66, which acts as the Cysteine persulfide intermediate.

Belongs to the GlpE family.

The protein resides in the cytoplasm. The enzyme catalyses thiosulfate + hydrogen cyanide = thiocyanate + sulfite + 2 H(+). It catalyses the reaction thiosulfate + [thioredoxin]-dithiol = [thioredoxin]-disulfide + hydrogen sulfide + sulfite + 2 H(+). Its function is as follows. Transferase that catalyzes the transfer of sulfur from thiosulfate to thiophilic acceptors such as cyanide or dithiols. May function in a CysM-independent thiosulfate assimilation pathway by catalyzing the conversion of thiosulfate to sulfite, which can then be used for L-cysteine biosynthesis. The chain is Thiosulfate sulfurtransferase GlpE from Actinobacillus pleuropneumoniae serotype 5b (strain L20).